Consider the following 751-residue polypeptide: Translation initiation factor IF-2, chloroplastic (751 aa).

The segment at 86-156 (KKEKSKFRKD…KSKKQTSAKN (71 aa)) is disordered. A compositionally biased stretch (basic and acidic residues) spans 93–106 (RKDEDYDSLKREDN). The segment covering 129–143 (VSNTNTLNKKNVVKS) has biased composition (low complexity). In terms of domain architecture, tr-type G spans 250–423 (KRPPVIAIMG…ILVSEIEDLK (174 aa)). A G1 region spans residues 259 to 266 (GHVDHGKT). 259–266 (GHVDHGKT) serves as a coordination point for GTP. The interval 284–288 (GITQK) is G2. The G3 stretch occupies residues 309–312 (DTPG). GTP contacts are provided by residues 309 to 313 (DTPGH) and 363 to 366 (NKID). Residues 363-366 (NKID) are G4. The segment at 399–401 (SAM) is G5.

Belongs to the TRAFAC class translation factor GTPase superfamily. Classic translation factor GTPase family. IF-2 subfamily.

Its subcellular location is the plastid. The protein resides in the chloroplast. Functionally, one of the essential components for the initiation of protein synthesis. Protects formylmethionyl-tRNA from spontaneous hydrolysis and promotes its binding to the 30S ribosomal subunits. Also involved in the hydrolysis of GTP during the formation of the 70S ribosomal complex. This is Translation initiation factor IF-2, chloroplastic (infB) from Rhodomonas salina (Cryptomonas salina).